The following is a 10287-amino-acid chain: Putative E3 ubiquitin-protein ligase protein PFF1365c (10287 aa).

Residues 47–82 (TRFFKSISNYGEFLLLQSSSRVISSYEHILRLLHQA) form a TPR 1 repeat. A compositionally biased stretch (low complexity) spans 566–589 (TNKSRDNINQNTNTNNNNNNNNNN). The interval 566–592 (TNKSRDNINQNTNTNNNNNNNNNNDGD) is disordered. One copy of the TPR 2 repeat lies at 631–665 (YPMFLKIQNKPQRCLKDISKPCEYYSNTLPIYGSY). Disordered stretches follow at residues 740–823 (KSSV…NKKK), 1221–1251 (NNSN…SSSS), and 1599–1670 (YVDD…DDNN). 3 stretches are compositionally biased toward low complexity: residues 767-810 (KANN…NNNN), 1221-1235 (NNSN…THNS), and 1242-1251 (SSSTYSSSSS). Acidic residues predominate over residues 1601 to 1635 (DDNEEDEGEEDKSEDYEYCDDEQQNDVYEDTEEES). Basic residues predominate over residues 1641-1653 (RKERRVHQKKKNS). Positions 1654–1670 (KVSINKKTNNSLSDDNN) are enriched in low complexity. The next 3 helical transmembrane spans lie at 1821 to 1841 (ACTF…TLFV), 1860 to 1880 (LKMA…GLLT), and 1900 to 1920 (ECCI…TIMI). The segment covering 2070 to 2080 (SRRGIPLKKKS) has biased composition (basic residues). The segment at 2070–2112 (SRRGIPLKKKSERNNSKEENVNNMDHNNNNNSNSNNNNFFHRG) is disordered. Over residues 2090 to 2107 (VNNMDHNNNNNSNSNNNN) the composition is skewed to low complexity. The ANK 1 repeat unit spans residues 2116–2145 (TNPRNNNITCDRKNMEFLKKLMKNDHDAVQ). The stretch at 2141-2175 (HDAVQCLGKAYSVFHKNFERAQIAFVAVFLHLTGY) is one TPR 3 repeat. Residues 2854 to 2865 (NLSSNKRSQKGY) show a composition bias toward polar residues. 9 disordered regions span residues 2854–2945 (NLSS…SKEP), 3087–3113 (KNRN…NNIN), 3303–3344 (NGHT…NDRG), 3561–3599 (FSKG…SSIN), 3942–3998 (TMEN…KDHI), 4076–4157 (LFNS…INYY), 4695–4716 (EKKN…KEEG), 4886–4972 (SPYF…LRNS), and 4984–5051 (YRNK…SNAD). The segment covering 2886-2929 (SLDKYNDKEKKNDKINNGDTKNSDDGKIDMDDKKYYNDDLKNSD) has biased composition (basic and acidic residues). Over residues 3090–3113 (NSNNNNNNNNTNNSNNSNNNNNIN) the composition is skewed to low complexity. A compositionally biased stretch (acidic residues) spans 3316 to 3335 (YDDDNCDNYDNYDNDNENDN). Composition is skewed to basic and acidic residues over residues 3567 to 3579 (KKEM…EKIK) and 3965 to 3974 (PSKDKSKHYN). Over residues 3975–3992 (DNNNNNNDDNNSNNNNDY) the composition is skewed to low complexity. Over residues 4079–4094 (SKKDGSSNNDKNDNSN) the composition is skewed to basic and acidic residues. Composition is skewed to low complexity over residues 4095-4116 (KNRN…NNNN) and 4124-4157 (NINN…INYY). The segment covering 4906–4917 (YNIQNSDNSNIG) has biased composition (polar residues). Composition is skewed to low complexity over residues 4918–4942 (DSEL…DSLN) and 4953–4972 (NSSS…LRNS). Positions 5026-5045 (KIKKNKSYKNKTHKNKKQKN) are enriched in basic residues. A run of 5 helical transmembrane segments spans residues 5058–5078 (LYGY…CIIL), 5106–5126 (FIKL…KYFA), 5552–5572 (EEIL…YYLG), 5716–5736 (LPIF…VVYI), and 5815–5835 (FLSY…NQII). Positions 5848–5917 (VNKNKGNDNV…NNNNVRNSNN (70 aa)) are disordered. Residues 6004-6032 (GINSLYVNGTNGNLKTDKILLHNFSNFDL) form an ANK 2 repeat. One copy of the TPR 4 repeat lies at 6051 to 6084 (LVHYFACAAYYIKRADVYNIMNYYNEHTHANFKQ). Disordered regions lie at residues 6495–6527 (EEEK…HEKK), 7123–7147 (EKKK…DNNR), and 7183–7217 (NKNN…CSNS). Over residues 6501–6527 (ENEKEVEKDENVHDEKDKVEQIEHEKK) the composition is skewed to basic and acidic residues. A compositionally biased stretch (polar residues) spans 7129–7147 (GSNNIGSNTNIHELSDNNR). TPR repeat units follow at residues 7347–7380 (SNDS…KPFI) and 7577–7610 (NNNN…YDDI). Residues 7571–7583 (DDGNNNNNNNDSM) are compositionally biased toward low complexity. Disordered stretches follow at residues 7571-7590 (DDGN…KDDM) and 7653-7712 (SNER…VNNI). Residues 7696–7706 (DNNKDKDDGNH) are compositionally biased toward basic and acidic residues. ANK repeat units follow at residues 7809 to 7839 (KYLT…NPNK), 7845 to 7875 (EKET…QVNK), and 7880 to 7917 (GNTA…DLTI). Disordered regions lie at residues 8208 to 8300 (LKDD…SAKN) and 8413 to 8448 (ALNS…NNYN). Residues 8219–8259 (YQKPYDKKVINKNKNDNYDKNDNYDKKDNYDTNDKNDKNNC) are compositionally biased toward basic and acidic residues. Residues 8277 to 8300 (VMNTNSSGRRTISKNSPNLSSAKN) are compositionally biased toward polar residues. Low complexity predominate over residues 8415 to 8448 (NSNMSNNNNNNNNSNNNNNNNSNNNNNNYNNNYN). TPR repeat units follow at residues 8782-8815 (QTCD…SNNI) and 9550-9584 (DLPI…ITSS). Disordered stretches follow at residues 9795 to 9818 (MGSD…HKYD) and 9913 to 9979 (NVLL…SKNT). Basic and acidic residues-rich tracts occupy residues 9800–9818 (ILKD…HKYD) and 9913–9930 (NVLL…DDIR). A compositionally biased stretch (low complexity) spans 9931–9971 (NNMNNNNNNNNNNNNNNNNNNNNNNNNNNNNNNNNNNNNLN). The region spanning 9938 to 10273 (NNNNNNNNNN…IKNCTAIDLD (336 aa)) is the HECT domain. Cys10241 serves as the catalytic Glycyl thioester intermediate.

It localises to the membrane. It catalyses the reaction S-ubiquitinyl-[E2 ubiquitin-conjugating enzyme]-L-cysteine + [acceptor protein]-L-lysine = [E2 ubiquitin-conjugating enzyme]-L-cysteine + N(6)-ubiquitinyl-[acceptor protein]-L-lysine.. It participates in protein modification; protein ubiquitination. Functionally, putative E3 ubiquitin-protein ligase. This is Putative E3 ubiquitin-protein ligase protein PFF1365c from Plasmodium falciparum (isolate 3D7).